Consider the following 179-residue polypeptide: Acireductone dioxygenase (179 aa).

Fe(2+)-binding residues include H97, H99, E103, and H141. Ni(2+)-binding residues include H97, H99, E103, and H141.

Belongs to the acireductone dioxygenase (ARD) family. As to quaternary structure, monomer. The cofactor is Fe(2+). It depends on Ni(2+) as a cofactor.

It catalyses the reaction 1,2-dihydroxy-5-(methylsulfanyl)pent-1-en-3-one + O2 = 3-(methylsulfanyl)propanoate + CO + formate + 2 H(+). The enzyme catalyses 1,2-dihydroxy-5-(methylsulfanyl)pent-1-en-3-one + O2 = 4-methylsulfanyl-2-oxobutanoate + formate + 2 H(+). It participates in amino-acid biosynthesis; L-methionine biosynthesis via salvage pathway; L-methionine from S-methyl-5-thio-alpha-D-ribose 1-phosphate: step 5/6. Catalyzes 2 different reactions between oxygen and the acireductone 1,2-dihydroxy-3-keto-5-methylthiopentene (DHK-MTPene) depending upon the metal bound in the active site. Fe-containing acireductone dioxygenase (Fe-ARD) produces formate and 2-keto-4-methylthiobutyrate (KMTB), the alpha-ketoacid precursor of methionine in the methionine recycle pathway. Ni-containing acireductone dioxygenase (Ni-ARD) produces methylthiopropionate, carbon monoxide and formate, and does not lie on the methionine recycle pathway. The protein is Acireductone dioxygenase of Granulibacter bethesdensis (strain ATCC BAA-1260 / CGDNIH1).